A 276-amino-acid chain; its full sequence is Lysosome-associated membrane glycoprotein 5 (276 aa).

Residues 1-27 (MDYRACTSALRMPVLLLLLCTFSCNLA) form the signal peptide. Over 28–231 (EQEVENLSGL…PTDQRKQLEE (204 aa)) the chain is Extracellular. Residues N33, N51, and N100 are each glycosylated (N-linked (GlcNAc...) asparagine). Residues 232 to 252 (TLPLILGLTLGVAILIIVAVY) traverse the membrane as a helical segment. Residues 253–276 (HIHHKMTANQVQIPRDRSLYKHMG) lie on the Cytoplasmic side of the membrane.

Belongs to the LAMP family. Glycosylated.

The protein resides in the cytoplasmic vesicle membrane. Its subcellular location is the cell membrane. It is found in the cell projection. It localises to the dendrite. The protein localises to the cytoplasmic vesicle. The protein resides in the secretory vesicle. Its subcellular location is the synaptic vesicle membrane. It is found in the growth cone membrane. It localises to the early endosome membrane. The protein localises to the recycling endosome. The protein resides in the endoplasmic reticulum-Golgi intermediate compartment membrane. Its subcellular location is the endosome membrane. In terms of biological role, plays a role in short-term synaptic plasticity in a subset of GABAergic neurons in the brain. This Xenopus tropicalis (Western clawed frog) protein is Lysosome-associated membrane glycoprotein 5 (lamp5).